The chain runs to 171 residues: 3-hydroxydecanoyl-[acyl-carrier-protein] dehydratase (171 aa).

H70 is a catalytic residue.

The protein belongs to the thioester dehydratase family. FabA subfamily. Homodimer.

Its subcellular location is the cytoplasm. The enzyme catalyses a (3R)-hydroxyacyl-[ACP] = a (2E)-enoyl-[ACP] + H2O. It carries out the reaction (3R)-hydroxydecanoyl-[ACP] = (2E)-decenoyl-[ACP] + H2O. It catalyses the reaction (2E)-decenoyl-[ACP] = (3Z)-decenoyl-[ACP]. It participates in lipid metabolism; fatty acid biosynthesis. In terms of biological role, necessary for the introduction of cis unsaturation into fatty acids. Catalyzes the dehydration of (3R)-3-hydroxydecanoyl-ACP to E-(2)-decenoyl-ACP and then its isomerization to Z-(3)-decenoyl-ACP. Can catalyze the dehydratase reaction for beta-hydroxyacyl-ACPs with saturated chain lengths up to 16:0, being most active on intermediate chain length. The chain is 3-hydroxydecanoyl-[acyl-carrier-protein] dehydratase from Pseudomonas aeruginosa (strain LESB58).